Consider the following 249-residue polypeptide: Phosphoribosylaminoimidazole-succinocarboxamide synthase (249 aa).

Belongs to the SAICAR synthetase family.

It catalyses the reaction 5-amino-1-(5-phospho-D-ribosyl)imidazole-4-carboxylate + L-aspartate + ATP = (2S)-2-[5-amino-1-(5-phospho-beta-D-ribosyl)imidazole-4-carboxamido]succinate + ADP + phosphate + 2 H(+). It functions in the pathway purine metabolism; IMP biosynthesis via de novo pathway; 5-amino-1-(5-phospho-D-ribosyl)imidazole-4-carboxamide from 5-amino-1-(5-phospho-D-ribosyl)imidazole-4-carboxylate: step 1/2. In Roseiflexus castenholzii (strain DSM 13941 / HLO8), this protein is Phosphoribosylaminoimidazole-succinocarboxamide synthase.